The primary structure comprises 502 residues: Lysine--tRNA ligase (502 aa).

Mg(2+) is bound by residues glutamate 409 and glutamate 416.

Belongs to the class-II aminoacyl-tRNA synthetase family. In terms of assembly, homodimer. Mg(2+) serves as cofactor.

The protein resides in the cytoplasm. It carries out the reaction tRNA(Lys) + L-lysine + ATP = L-lysyl-tRNA(Lys) + AMP + diphosphate. In Shouchella clausii (strain KSM-K16) (Alkalihalobacillus clausii), this protein is Lysine--tRNA ligase.